Here is a 479-residue protein sequence, read N- to C-terminus: Ubiquinone biosynthesis monooxygenase COQ6, mitochondrial (479 aa).

It belongs to the UbiH/COQ6 family. In terms of assembly, component of a multi-subunit COQ enzyme complex, composed of at least COQ3, COQ4, COQ5, COQ6, COQ7 and COQ9. FAD serves as cofactor.

The protein localises to the mitochondrion inner membrane. The enzyme catalyses 4-hydroxy-3-(all-trans-decaprenyl)benzoate + 2 reduced [2Fe-2S]-[ferredoxin] + O2 + 2 H(+) = 3,4-dihydroxy-5-(all-trans-decaprenyl)benzoate + 2 oxidized [2Fe-2S]-[ferredoxin] + H2O. It catalyses the reaction 2-methoxy-6-(all-trans-decaprenyl)phenol + 2 reduced [2Fe-2S]-[ferredoxin] + O2 + 2 H(+) = 2-methoxy-6-(all-trans-decaprenyl)benzene-1,4-diol + 2 oxidized [2Fe-2S]-[ferredoxin] + H2O. The protein operates within cofactor biosynthesis; ubiquinone biosynthesis. Its function is as follows. FAD-dependent monooxygenase required for two non-consecutive steps during ubiquinone biosynthesis. Required for the C5-ring hydroxylation during ubiquinone biosynthesis by catalyzing the hydroxylation of 4-hydroxy-3-(all-trans-decaprenyl)benzoic acid to 3,4-dihydroxy-5-(all-trans-decaprenyl)benzoic acid. Also acts downstream of COQ4, for the C1-hydroxylation during ubiquinone biosynthesis by catalyzing the hydroxylation of 2-methoxy-6-(all-trans-decaprenyl)phenol to 2-methoxy-6-(all-trans-decaprenyl)benzene-1,4-diol. The electrons required for the hydroxylation reaction are funneled indirectly to coq6 from NADPH via a ferredoxin/ferredoxin reductase system. The protein is Ubiquinone biosynthesis monooxygenase COQ6, mitochondrial of Schizosaccharomyces pombe (strain 972 / ATCC 24843) (Fission yeast).